A 294-amino-acid chain; its full sequence is Mitochondrial HMG-box protein CIM1 (294 aa).

The transit peptide at 1 to 90 (MKATLLLKAQ…RLYYASFCQS (90 aa)) directs the protein to the mitochondrion. The tract at residues 27 to 102 (NRTPYTAFQY…IDILNVSKIE (76 aa)) is HMG-box A. The interval 110–258 (PIPAMSEYLL…IQILQKNMDI (149 aa)) is HMG-box B.

It localises to the mitochondrion matrix. In terms of biological role, mitochondrial HMG-box protein that limits the copy number of mitochondrial DNA (mtDNA), antagonizing HMG-box containing protein ABF2, a mtDNA packaging factor. This Saccharomyces cerevisiae (strain ATCC 204508 / S288c) (Baker's yeast) protein is Mitochondrial HMG-box protein CIM1.